We begin with the raw amino-acid sequence, 237 residues long: Aliphatic sulfonates import ATP-binding protein SsuB 1 (237 aa).

One can recognise an ABC transporter domain in the interval 5–221 (LMNIRVDRKA…PRDRRDPLLA (217 aa)). Residue 38–45 (GPSGCGKS) participates in ATP binding.

This sequence belongs to the ABC transporter superfamily. Aliphatic sulfonates importer (TC 3.A.1.17.2) family. As to quaternary structure, the complex is composed of two ATP-binding proteins (SsuB), two transmembrane proteins (SsuC) and a solute-binding protein (SsuA).

The protein resides in the cell inner membrane. The catalysed reaction is ATP + H2O + aliphatic sulfonate-[sulfonate-binding protein]Side 1 = ADP + phosphate + aliphatic sulfonateSide 2 + [sulfonate-binding protein]Side 1.. Part of the ABC transporter complex SsuABC involved in aliphatic sulfonates import. Responsible for energy coupling to the transport system. In Pseudomonas savastanoi pv. phaseolicola (strain 1448A / Race 6) (Pseudomonas syringae pv. phaseolicola (strain 1448A / Race 6)), this protein is Aliphatic sulfonates import ATP-binding protein SsuB 1.